The following is a 798-amino-acid chain: Putative antiporter subunit mnhA2 (798 aa).

21 helical membrane-spanning segments follow: residues 1–21, 33–53, 78–98, 109–129, 133–153, 167–187, 209–229, 241–261, 272–292, 300–320, 337–357, 381–401, 431–451, 472–492, 526–546, 593–613, 625–645, 649–669, 674–694, 710–730, and 766–786; these read MSLV…LFTL, IALL…PSVM, GLSL…VYYA, LPRF…IVTA, ILMY…IVYW, FMIT…IYIV, FIPI…QFPF, TPVS…FLLF, FYIY…AVNA, AILA…VGLG, MILF…GALF, VFPI…GIPF, IITV…VYMI, PFLF…IFFI, GFNL…IMAL, ITIT…QAGF, GPIE…LTFI, LTMV…FILM, LALT…VSFS, AVKI…VFIA, and IDTL…YTLL.

It belongs to the CPA3 antiporters (TC 2.A.63) subunit A family. As to quaternary structure, may form a heterooligomeric complex that consists of seven subunits: mnhA2, mnhB2, mnhC2, mnhD2, mnhE2, mnhF2 and mnhG2.

It localises to the cell membrane. This is Putative antiporter subunit mnhA2 (mnhA2) from Staphylococcus saprophyticus subsp. saprophyticus (strain ATCC 15305 / DSM 20229 / NCIMB 8711 / NCTC 7292 / S-41).